Here is a 558-residue protein sequence, read N- to C-terminus: CTP synthase (558 aa).

The amidoligase domain stretch occupies residues 1-267; sequence MTKFVFVTGG…AQQTLELLNL (267 aa). Ser13 is a binding site for CTP. Ser13 is a binding site for UTP. ATP-binding positions include 14-19 and Asp71; that span reads SIGKGI. Mg(2+)-binding residues include Asp71 and Glu141. Residues 148–150, 188–193, and Lys224 contribute to the CTP site; these read DIE and KTKPTQ. UTP is bound by residues 188-193 and Lys224; that span reads KTKPTQ. One can recognise a Glutamine amidotransferase type-1 domain in the interval 292-534; that stretch reads EVALVGKYVQ…VKASVDYNHV (243 aa). Gly354 serves as a coordination point for L-glutamine. The active-site Nucleophile; for glutamine hydrolysis is the Cys381. L-glutamine-binding positions include 382 to 385, Glu405, and Arg462; that span reads MGMQ. Active-site residues include His507 and Glu509.

The protein belongs to the CTP synthase family. In terms of assembly, homotetramer.

The catalysed reaction is UTP + L-glutamine + ATP + H2O = CTP + L-glutamate + ADP + phosphate + 2 H(+). It carries out the reaction L-glutamine + H2O = L-glutamate + NH4(+). The enzyme catalyses UTP + NH4(+) + ATP = CTP + ADP + phosphate + 2 H(+). Its pathway is pyrimidine metabolism; CTP biosynthesis via de novo pathway; CTP from UDP: step 2/2. Allosterically activated by GTP, when glutamine is the substrate; GTP has no effect on the reaction when ammonia is the substrate. The allosteric effector GTP functions by stabilizing the protein conformation that binds the tetrahedral intermediate(s) formed during glutamine hydrolysis. Inhibited by the product CTP, via allosteric rather than competitive inhibition. Functionally, catalyzes the ATP-dependent amination of UTP to CTP with either L-glutamine or ammonia as the source of nitrogen. Regulates intracellular CTP levels through interactions with the four ribonucleotide triphosphates. This Gloeothece citriformis (strain PCC 7424) (Cyanothece sp. (strain PCC 7424)) protein is CTP synthase.